Consider the following 1030-residue polypeptide: Toll-like receptor 9 (1030 aa).

The N-terminal stretch at 1-24 (MGPRCTLHPLSLLVQVTALAAALA) is a signal peptide. The Extracellular portion of the chain corresponds to 25–816 (QGRLPAFLPC…LCLDETLSWN (792 aa)). A disulfide bond links Cys-34 and Cys-44. A DNA-binding site is contributed by 46-50 (WLFLK). LRR repeat units lie at residues 61-84 (RANV…DFVH), 86-109 (SSLR…HFPC), 121-146 (VPTL…SLVS), 149-165 (LSRT…LTGL), 166-189 (HALR…ALEV), 197-220 (LGNL…LPPS), 222-241 (ETLL…DLAN), 242-267 (LTAL…CREC), 282-305 (LSRL…WFRG), 307-331 (DRLQ…AFQG), 332-355 (LARL…HLHL), 362-385 (LRSL…TLQP), 389-412 (LPML…IFGA), 414-439 (PGLL…TREV), 469-493 (CKAF…MFAR), 495-518 (SRLE…QFVP), 519-542 (LTSL…SFTE), 544-571 (PRLE…SFVA), 573-597 (LPAL…LCSA), 599-621 (LCAL…LYLR), 626-649 (LRSL…ALDN), 651-674 (PKSL…SLTL), 675-698 (LPKL…SLPS), 700-722 (TQLR…FFAL), 723-746 (AKQL…WFGS), and 748-771 (VGNL…TFVG). Residue Asn-63 is glycosylated (N-linked (GlcNAc...) asparagine). DNA contacts are provided by residues 71 to 76 (SNRIHH) and 94 to 108 (KWNC…MHFP). The cysteines at positions 97 and 109 are disulfide-linked. A glycan (N-linked (GlcNAc...) asparagine) is linked at Asn-128. Residues Tyr-131, Arg-151, and 178–180 (YYK) each bind DNA. Cys-177 and Cys-183 are oxidised to a cystine. Asn-199 is a glycosylation site (N-linked (GlcNAc...) asparagine). Tyr-207 contacts DNA. 2 N-linked (GlcNAc...) asparagine glycosylation sites follow: Asn-209 and Asn-241. 2 disulfide bridges follow: Cys-254-Cys-267 and Cys-257-Cys-264. Residue Cys-257 is the site of S-palmitoyl cysteine attachment. Arg-261 contacts DNA. Residue Cys-264 is the site of S-palmitoyl cysteine attachment. Asn-339 carries an N-linked (GlcNAc...) asparagine glycan. The cysteines at positions 469 and 499 are disulfide-linked. The N-linked (GlcNAc...) asparagine glycan is linked to Asn-512. A glycan (N-linked (GlcNAc...) asparagine) is linked at Asn-566. Residues Asn-668 and Asn-693 are each glycosylated (N-linked (GlcNAc...) asparagine). N-linked (GlcNAc...) asparagine glycosylation is present at Asn-730. Intrachain disulfides connect Cys-763–Cys-789 and Cys-765–Cys-808. A helical transmembrane segment spans residues 817–837 (CFGISLLAMALGLVVPMLHHL). At 838–1030 (CGWDLWYCFH…NFCRGPTTAE (193 aa)) the chain is on the cytoplasmic side. Residues 865–1010 (LFYDAFVVFD…SFWAQLGTAL (146 aa)) form the TIR domain.

Belongs to the Toll-like receptor family. As to quaternary structure, monomer and homodimer. Exists as a monomer in the absence of unmethylated cytidine-phosphate-guanosine (CpG) ligand. Proteolytic processing of an insertion loop (Z-loop) is required for homodimerization upon binding to the unmethylated CpG ligand leading to its activation. Interacts with MYD88 via their respective TIR domains. Interacts with BTK. Interacts (via transmembrane domain) with UNC93B1. Interacts with CD300LH; the interaction may promote full activation of TLR9-triggered innate responses. Interacts with CNPY3 and HSP90B1; this interaction is required for proper folding in the endoplasmic reticulum. Interacts with SMPDL3B. Interacts with CD82; this interaction is essential for TLR9-dependent myddosome formation in response to CpG stimulation. Post-translationally, activated by proteolytic cleavage of the flexible loop between repeats LRR14 and LRR15 within the ectodomain. Cleavage requires UNC93B1. Proteolytically processed by first removing the majority of the ectodomain by either asparagine endopeptidase (AEP) or a cathepsin followed by a trimming event that is solely cathepsin mediated and required for optimal receptor signaling. In terms of processing, palmitoylated by ZDHHC3 in the Golgi regulates TLR9 trafficking from the Golgi to endosomes. Depalmitoylation by PPT1 controls the release of TLR9 from UNC93B1 in endosomes.

The protein resides in the endoplasmic reticulum membrane. The protein localises to the endosome. It is found in the lysosome. Its subcellular location is the cytoplasmic vesicle. It localises to the phagosome. Its function is as follows. Key component of innate and adaptive immunity. TLRs (Toll-like receptors) control host immune response against pathogens through recognition of molecular patterns specific to microorganisms. TLR9 is a nucleotide-sensing TLR which is activated by unmethylated cytidine-phosphate-guanosine (CpG) dinucleotides. Acts via MYD88 and TRAF6, leading to NF-kappa-B activation, cytokine secretion and the inflammatory response. Upon CpG stimulation, induces B-cell proliferation, activation, survival and antibody production. The protein is Toll-like receptor 9 (TLR9) of Sus scrofa (Pig).